A 478-amino-acid polypeptide reads, in one-letter code: Probable cytosol aminopeptidase (478 aa).

Positions 244 and 249 each coordinate Mn(2+). The active site involves Lys256. Mn(2+)-binding residues include Asp267, Asp326, and Glu328. Residue Arg330 is part of the active site.

This sequence belongs to the peptidase M17 family. The cofactor is Mn(2+).

Its subcellular location is the cytoplasm. It catalyses the reaction Release of an N-terminal amino acid, Xaa-|-Yaa-, in which Xaa is preferably Leu, but may be other amino acids including Pro although not Arg or Lys, and Yaa may be Pro. Amino acid amides and methyl esters are also readily hydrolyzed, but rates on arylamides are exceedingly low.. It carries out the reaction Release of an N-terminal amino acid, preferentially leucine, but not glutamic or aspartic acids.. In terms of biological role, presumably involved in the processing and regular turnover of intracellular proteins. Catalyzes the removal of unsubstituted N-terminal amino acids from various peptides. The sequence is that of Probable cytosol aminopeptidase from Fusobacterium nucleatum subsp. nucleatum (strain ATCC 25586 / DSM 15643 / BCRC 10681 / CIP 101130 / JCM 8532 / KCTC 2640 / LMG 13131 / VPI 4355).